The chain runs to 241 residues: Putative hydrolase 080R (241 aa).

Positions 50–241 constitute a Nudix hydrolase domain; sequence FPDLSFNLMV…VIKVQKIMIL (192 aa). The Nudix box signature appears at 136–157; sequence GHCNGNEPVLSTLLREFREETT. Mg(2+) is bound by residues Glu151, Glu155, and Asp204.

The protein belongs to the Nudix hydrolase family.

This Aedes vexans (Inland floodwater mosquito) protein is Putative hydrolase 080R.